The chain runs to 437 residues: Glutamyl-tRNA reductase (437 aa).

Substrate is bound by residues 46-49 (TCNR), Ser-97, 102-104 (EEQ), and Gln-108. Cys-47 functions as the Nucleophile in the catalytic mechanism. 177–182 (GAGEMG) is an NADP(+) binding site. Residues 410–437 (NGRVSEGKDAKVEEGKPEVDVQRSKAES) form a disordered region. A compositionally biased stretch (basic and acidic residues) spans 414-437 (SEGKDAKVEEGKPEVDVQRSKAES).

Belongs to the glutamyl-tRNA reductase family. As to quaternary structure, homodimer.

The enzyme catalyses (S)-4-amino-5-oxopentanoate + tRNA(Glu) + NADP(+) = L-glutamyl-tRNA(Glu) + NADPH + H(+). The protein operates within porphyrin-containing compound metabolism; protoporphyrin-IX biosynthesis; 5-aminolevulinate from L-glutamyl-tRNA(Glu): step 1/2. Catalyzes the NADPH-dependent reduction of glutamyl-tRNA(Glu) to glutamate 1-semialdehyde (GSA). The polypeptide is Glutamyl-tRNA reductase (Archaeoglobus fulgidus (strain ATCC 49558 / DSM 4304 / JCM 9628 / NBRC 100126 / VC-16)).